Reading from the N-terminus, the 498-residue chain is Beta-amylase 5 (498 aa).

Residues D56, H96, and D104 each contribute to the substrate site. The Proton donor role is filled by E189. Substrate-binding residues include K298, H303, and T345. The active-site Proton acceptor is E383. Residues 384–385 (NA) and R423 each bind substrate.

It belongs to the glycosyl hydrolase 14 family. Detected in phloem sieve elements.

Its subcellular location is the cytoplasm. It catalyses the reaction Hydrolysis of (1-&gt;4)-alpha-D-glucosidic linkages in polysaccharides so as to remove successive maltose units from the non-reducing ends of the chains.. Its function is as follows. Beta-amylase activity. Major cytosolic beta-amylase isoform in rosette leaves and inflorescences stems. The polypeptide is Beta-amylase 5 (BAM5) (Arabidopsis thaliana (Mouse-ear cress)).